A 291-amino-acid chain; its full sequence is Pyridoxal 5'-phosphate synthase subunit PdxS (291 aa).

A D-ribose 5-phosphate-binding site is contributed by Asp23. Catalysis depends on Lys80, which acts as the Schiff-base intermediate with D-ribose 5-phosphate. A D-ribose 5-phosphate-binding site is contributed by Gly152. Residue Arg164 participates in D-glyceraldehyde 3-phosphate binding. D-ribose 5-phosphate contacts are provided by residues Gly213 and 234-235 (GS).

The protein belongs to the PdxS/SNZ family. As to quaternary structure, in the presence of PdxT, forms a dodecamer of heterodimers.

It carries out the reaction aldehydo-D-ribose 5-phosphate + D-glyceraldehyde 3-phosphate + L-glutamine = pyridoxal 5'-phosphate + L-glutamate + phosphate + 3 H2O + H(+). It functions in the pathway cofactor biosynthesis; pyridoxal 5'-phosphate biosynthesis. Its function is as follows. Catalyzes the formation of pyridoxal 5'-phosphate from ribose 5-phosphate (RBP), glyceraldehyde 3-phosphate (G3P) and ammonia. The ammonia is provided by the PdxT subunit. Can also use ribulose 5-phosphate and dihydroxyacetone phosphate as substrates, resulting from enzyme-catalyzed isomerization of RBP and G3P, respectively. The protein is Pyridoxal 5'-phosphate synthase subunit PdxS of Bifidobacterium longum (strain NCC 2705).